The sequence spans 184 residues: Inner membrane-spanning protein YciB (184 aa).

5 helical membrane-spanning segments follow: residues 19–39, 52–72, 76–96, 123–143, and 151–171; these read LVGIREAAITLIIATLIQLLI, LFMGIAVVFFGTLTAYFNQLE, WKVTIVYAIFALVLLVSQYGF, LGWALFFLLCMLINLYISQYL, and FKTFGILGMTLIATIITGIYI.

This sequence belongs to the YciB family.

Its subcellular location is the cell inner membrane. Its function is as follows. Plays a role in cell envelope biogenesis, maintenance of cell envelope integrity and membrane homeostasis. This is Inner membrane-spanning protein YciB from Pasteurella multocida (strain Pm70).